Consider the following 79-residue polypeptide: Large ribosomal subunit protein bL31 (79 aa).

This sequence belongs to the bacterial ribosomal protein bL31 family. Type A subfamily. In terms of assembly, part of the 50S ribosomal subunit.

Binds the 23S rRNA. The polypeptide is Large ribosomal subunit protein bL31 (rpmE) (Rickettsia bellii (strain RML369-C)).